We begin with the raw amino-acid sequence, 265 residues long: Probable trehalose-phosphate phosphatase (265 aa).

D35 serves as the catalytic Nucleophile. Residues D35, D37, and D213 each coordinate Mg(2+). Substrate is bound at residue 35-37; sequence DID.

This sequence belongs to the trehalose phosphatase family. Mg(2+) is required as a cofactor.

The catalysed reaction is alpha,alpha-trehalose 6-phosphate + H2O = alpha,alpha-trehalose + phosphate. Its pathway is glycan biosynthesis; trehalose biosynthesis. Its function is as follows. Removes the phosphate from trehalose 6-phosphate to produce free trehalose. The sequence is that of Probable trehalose-phosphate phosphatase (otsB) from Sinorhizobium fredii (strain NBRC 101917 / NGR234).